A 277-amino-acid chain; its full sequence is NADPH-dependent 7-cyano-7-deazaguanine reductase (277 aa).

83 to 85 provides a ligand contact to substrate; that stretch reads IES. 85-86 is an NADPH binding site; sequence SK. Cys184 serves as the catalytic Thioimide intermediate. Asp191 (proton donor) is an active-site residue. 223–224 contacts substrate; it reads HE. 252-253 contacts NADPH; sequence RG.

Belongs to the GTP cyclohydrolase I family. QueF type 2 subfamily. As to quaternary structure, homodimer.

Its subcellular location is the cytoplasm. It carries out the reaction 7-aminomethyl-7-carbaguanine + 2 NADP(+) = 7-cyano-7-deazaguanine + 2 NADPH + 3 H(+). The protein operates within tRNA modification; tRNA-queuosine biosynthesis. Functionally, catalyzes the NADPH-dependent reduction of 7-cyano-7-deazaguanine (preQ0) to 7-aminomethyl-7-deazaguanine (preQ1). The sequence is that of NADPH-dependent 7-cyano-7-deazaguanine reductase from Cupriavidus necator (strain ATCC 17699 / DSM 428 / KCTC 22496 / NCIMB 10442 / H16 / Stanier 337) (Ralstonia eutropha).